The primary structure comprises 376 residues: Erythronate-4-phosphate dehydrogenase (376 aa).

Residues serine 45 and threonine 67 each contribute to the substrate site. Aspartate 147 serves as a coordination point for NAD(+). Arginine 209 is a catalytic residue. Residue aspartate 233 coordinates NAD(+). The active site involves glutamate 238. The active-site Proton donor is histidine 255. Glycine 258 contacts NAD(+). Tyrosine 259 provides a ligand contact to substrate.

Belongs to the D-isomer specific 2-hydroxyacid dehydrogenase family. PdxB subfamily. As to quaternary structure, homodimer.

The protein localises to the cytoplasm. The catalysed reaction is 4-phospho-D-erythronate + NAD(+) = (R)-3-hydroxy-2-oxo-4-phosphooxybutanoate + NADH + H(+). The protein operates within cofactor biosynthesis; pyridoxine 5'-phosphate biosynthesis; pyridoxine 5'-phosphate from D-erythrose 4-phosphate: step 2/5. Catalyzes the oxidation of erythronate-4-phosphate to 3-hydroxy-2-oxo-4-phosphonooxybutanoate. This chain is Erythronate-4-phosphate dehydrogenase, found in Shewanella oneidensis (strain ATCC 700550 / JCM 31522 / CIP 106686 / LMG 19005 / NCIMB 14063 / MR-1).